The primary structure comprises 433 residues: Methylenetetrahydrofolate--tRNA-(uracil-5-)-methyltransferase TrmFO (433 aa).

Position 8 to 13 (8 to 13 (GAGLAG)) interacts with FAD.

The protein belongs to the MnmG family. TrmFO subfamily. Requires FAD as cofactor.

It localises to the cytoplasm. It carries out the reaction uridine(54) in tRNA + (6R)-5,10-methylene-5,6,7,8-tetrahydrofolate + NADH + H(+) = 5-methyluridine(54) in tRNA + (6S)-5,6,7,8-tetrahydrofolate + NAD(+). It catalyses the reaction uridine(54) in tRNA + (6R)-5,10-methylene-5,6,7,8-tetrahydrofolate + NADPH + H(+) = 5-methyluridine(54) in tRNA + (6S)-5,6,7,8-tetrahydrofolate + NADP(+). Its function is as follows. Catalyzes the folate-dependent formation of 5-methyl-uridine at position 54 (M-5-U54) in all tRNAs. This chain is Methylenetetrahydrofolate--tRNA-(uracil-5-)-methyltransferase TrmFO, found in Carboxydothermus hydrogenoformans (strain ATCC BAA-161 / DSM 6008 / Z-2901).